Reading from the N-terminus, the 184-residue chain is Type-1 fimbrial protein, A chain (184 aa).

The first 22 residues, 1-22, serve as a signal peptide directing secretion; the sequence is MKHKLMTSTIASLMFVAGAAVA. Cys46 and Cys86 form a disulfide bridge.

Belongs to the fimbrial protein family.

Its subcellular location is the fimbrium. In terms of biological role, fimbriae (also called pili), polar filaments radiating from the surface of the bacterium to a length of 0.5-1.5 micrometers and numbering 100-300 per cell, enable bacteria to colonize the epithelium of specific host organs. The protein is Type-1 fimbrial protein, A chain (fimA) of Salmonella typhi.